The sequence spans 229 residues: Golgi to ER traffic protein 1 (229 aa).

Over methionine 1–leucine 14 the chain is Lumenal. A helical transmembrane segment spans residues valine 15 to serine 34. The Cytoplasmic segment spans residues threonine 35–leucine 122. Residues histidine 60 to leucine 117 adopt a coiled-coil conformation. The helical transmembrane segment at leucine 123–phenylalanine 143 threads the bilayer. The Lumenal segment spans residues tyrosine 144–serine 167. The helical transmembrane segment at valine 168 to valine 184 threads the bilayer. The Cytoplasmic portion of the chain corresponds to leucine 185–asparagine 229. Over residues proline 210 to serine 219 the composition is skewed to basic and acidic residues. Residues proline 210–asparagine 229 are disordered.

It belongs to the WRB/GET1 family. As to quaternary structure, component of the Golgi to ER traffic (GET) complex, which is composed of GET1, GET2 and GET3. Within the complex, GET1 and GET2 form a heterotetramer which is stabilized by phosphatidylinositol binding and which binds to the GET3 homodimer.

The protein resides in the endoplasmic reticulum membrane. It localises to the golgi apparatus membrane. Its function is as follows. Required for the post-translational delivery of tail-anchored (TA) proteins to the endoplasmic reticulum. Together with GET2, acts as a membrane receptor for soluble GET3, which recognizes and selectively binds the transmembrane domain of TA proteins in the cytosol. The GET complex cooperates with the HDEL receptor ERD2 to mediate the ATP-dependent retrieval of resident ER proteins that contain a C-terminal H-D-E-L retention signal from the Golgi to the ER. This chain is Golgi to ER traffic protein 1, found in Scheffersomyces stipitis (strain ATCC 58785 / CBS 6054 / NBRC 10063 / NRRL Y-11545) (Yeast).